The chain runs to 476 residues: ATP synthase subunit beta (476 aa).

154–161 contacts ATP; sequence GGAGVGKT.

This sequence belongs to the ATPase alpha/beta chains family. As to quaternary structure, F-type ATPases have 2 components, CF(1) - the catalytic core - and CF(0) - the membrane proton channel. CF(1) has five subunits: alpha(3), beta(3), gamma(1), delta(1), epsilon(1). CF(0) has four main subunits: a(1), b(1), b'(1) and c(9-12).

The protein localises to the cell inner membrane. It catalyses the reaction ATP + H2O + 4 H(+)(in) = ADP + phosphate + 5 H(+)(out). In terms of biological role, produces ATP from ADP in the presence of a proton gradient across the membrane. The catalytic sites are hosted primarily by the beta subunits. This Rhodopseudomonas palustris (strain HaA2) protein is ATP synthase subunit beta.